A 94-amino-acid chain; its full sequence is Integration host factor subunit beta (94 aa).

Belongs to the bacterial histone-like protein family. Heterodimer of an alpha and a beta chain.

Functionally, this protein is one of the two subunits of integration host factor, a specific DNA-binding protein that functions in genetic recombination as well as in transcriptional and translational control. The polypeptide is Integration host factor subunit beta (ihfB) (Haemophilus influenzae (strain ATCC 51907 / DSM 11121 / KW20 / Rd)).